The following is a 101-amino-acid chain: Urease subunit beta (101 aa).

This sequence belongs to the urease beta subunit family. In terms of assembly, heterotrimer of UreA (gamma), UreB (beta) and UreC (alpha) subunits. Three heterotrimers associate to form the active enzyme.

Its subcellular location is the cytoplasm. It carries out the reaction urea + 2 H2O + H(+) = hydrogencarbonate + 2 NH4(+). Its pathway is nitrogen metabolism; urea degradation; CO(2) and NH(3) from urea (urease route): step 1/1. The chain is Urease subunit beta from Rhodopseudomonas palustris (strain ATCC BAA-98 / CGA009).